We begin with the raw amino-acid sequence, 163 residues long: Interleukin-31 (163 aa).

Residues 1 to 23 (MIFHTGTTKPTLVLLCCIGTWLA) form the signal peptide. Residues Asn55, Asn84, and Asn124 are each glycosylated (N-linked (GlcNAc...) asparagine).

The protein localises to the secreted. Functionally, activates STAT3 and possibly STAT1 and STAT5 through the IL31 heterodimeric receptor composed of IL31RA and OSMR. May function in skin immunity. Enhances myeloid progenitor cell survival in vitro. Induces RETNLA and serum amyloid A protein expression in macrophages. The polypeptide is Interleukin-31 (Il31) (Mus musculus (Mouse)).